The sequence spans 1002 residues: Protein SMAX1-LIKE 7 (1002 aa).

A Clp R domain is found at 8–185; sequence ARQCLTEETA…DVLHPPVTSQ (178 aa). Repeat regions lie at residues 12–86 and 103–185; these read LTEE…LDRL and VSNS…VTSQ. The EAR signature appears at 854–858; that stretch reads LDLNL.

This sequence belongs to the ClpA/ClpB family. Interacts with TPL/TPR in an EAR-motif dependent manner. Interacts with TPL, TPR1, TPR2 and TPR4. Interacts with MAX2 and TPR2. Interacts with D14. The interaction with D14 occurs in the presence of (2'R) stereoisomers of strigolactones, but not (2'S) stereoisomers. In terms of processing, ubiquitinated upon strigolactone treatment. Strigolactone, but not karrikin, triggers rapid SCF(MAX2)-dependent degradation. In terms of tissue distribution, expressed in axillary branches and roots. Detected in seedlings and leaves. Expressed in the primary rosette buds and expanding leaves of adult rosettes, the vasculature of the hypocotyls, cotyledons, and mature roots, and in the midvein and petioles of young leaves.

The protein localises to the nucleus. Probable component of a transcriptional corepressor complex involved in branching control. Regulates cotyledon expansion and lateral root growth, but not germination or hypocotyl elongation. Promotes auxin transport and PIN1 accumulation in the stem and represses BRC1/TCP18 expression in axillary buds. The polypeptide is Protein SMAX1-LIKE 7 (Arabidopsis thaliana (Mouse-ear cress)).